We begin with the raw amino-acid sequence, 252 residues long: NAC domain-containing protein 23 (252 aa).

The NAC domain maps to 12–177 (MPPGFRFQPT…EMVLCRISNK (166 aa)). The DNA-binding element occupies 110–183 (TAVKRRFVFY…ISNKDLPKPP (74 aa)). Residues 225-252 (VDDAAAGTDDPGDLDEEIDDSMQRNHGG) are disordered. The segment covering 234 to 244 (DPGDLDEEIDD) has biased composition (acidic residues).

In terms of assembly, forms heterodimers with NAC26. Expressed in stems and panicles. Expressed in developing endosperm.

Its subcellular location is the nucleus. It is found in the cytoplasm. Its function is as follows. Transcription factor involved in the regulation of seed size. Binds to DNA-specific sequences of CLPD1 and OAT promoters in vitro. The sequence is that of NAC domain-containing protein 23 from Oryza sativa subsp. japonica (Rice).